A 314-amino-acid chain; its full sequence is Peroxidase 2 (314 aa).

Residues 1–23 form the signal peptide; that stretch reads MASASSVSLMLLVAAAMASAASA. Pyrrolidone carboxylic acid is present on Q24. Disulfide bonds link C34–C109, C67–C72, C115–C310, and C194–C219. The active-site Proton acceptor is the H65. 5 residues coordinate Ca(2+): D66, V69, G71, D73, and S75. N148 carries an N-linked (GlcNAc...) asparagine glycan. Substrate is bound at residue P157. N169 is a glycosylation site (N-linked (GlcNAc...) asparagine). H187 serves as a coordination point for heme b. T188 contributes to the Ca(2+) binding site. N203 carries N-linked (GlcNAc...) asparagine glycosylation. Positions 234, 237, and 242 each coordinate Ca(2+). N-linked (GlcNAc...) asparagine glycans are attached at residues N274 and N309.

It belongs to the peroxidase family. Classical plant (class III) peroxidase subfamily. Ca(2+) is required as a cofactor. Requires heme b as cofactor.

The protein resides in the secreted. It carries out the reaction 2 a phenolic donor + H2O2 = 2 a phenolic radical donor + 2 H2O. In terms of biological role, removal of H(2)O(2), oxidation of toxic reductants, biosynthesis and degradation of lignin, suberization, auxin catabolism, response to environmental stresses such as wounding, pathogen attack and oxidative stress. These functions might be dependent on each isozyme/isoform in each plant tissue. The sequence is that of Peroxidase 2 (PRX112) from Oryza sativa subsp. japonica (Rice).